The sequence spans 574 residues: Probable E3 ubiquitin-protein ligase ipaH4.5 (574 aa).

The interaction with target proteins stretch occupies residues 1 to 284 (MKPINNHSFF…YHGPQIYFSM (284 aa)). LRR repeat units follow at residues 63–82 (REPV…PLPL), 83–104 (HIRE…SPLL), 105–122 (TELH…TLPS), 123–143 (QLIK…SLPP), 144–165 (YLQS…PSTL), 166–183 (TILR…ELPH), 184–205 (RLQE…PQSL), 206–223 (KYLK…RLPQ), 224–246 (ELLA…ITLP), and 247–270 (ICTN…QRLT). Positions 285 to 292 (SDGQQNTL) are linker. The interval 293 to 574 (HRPLADAVTA…YRQLTDEVLA (282 aa)) is E3 ubiquitin-protein ligase catalytic domain. The 280-residue stretch at 295-574 (PLADAVTAWF…YRQLTDEVLA (280 aa)) folds into the NEL domain. Cys379 acts as the Glycyl thioester intermediate in catalysis.

The protein belongs to the LRR-containing bacterial E3 ligase family. Post-translationally, ubiquitinated in the presence of host E1 ubiquitin-activating enzyme, E2 ubiquitin-conjugating enzyme and ubiquitin.

It localises to the secreted. Its subcellular location is the host cytoplasm. The enzyme catalyses S-ubiquitinyl-[E2 ubiquitin-conjugating enzyme]-L-cysteine + [acceptor protein]-L-lysine = [E2 ubiquitin-conjugating enzyme]-L-cysteine + N(6)-ubiquitinyl-[acceptor protein]-L-lysine.. Functionally, effector proteins function to alter host cell physiology and promote bacterial survival in host tissues. This protein is an E3 ubiquitin ligase that interferes with host's ubiquitination pathway. The protein is Probable E3 ubiquitin-protein ligase ipaH4.5 (ipaH4.5) of Shigella flexneri.